Consider the following 161-residue polypeptide: Sec-independent protein translocase protein TatB (161 aa).

Residues 2 to 22 form a helical membrane-spanning segment; it reads FNDIGALELVTLVVLAVLVFG. The interval 102–161 is disordered; the sequence is DAVHGRDAESSSSGSSSGSSSAASGNGRVDMSKKPEKPEKPGKTDKPAADDRPPFDMDAT. Residues 111–126 show a composition bias toward low complexity; that stretch reads SSSSGSSSGSSSAASG. Residues 131-161 are compositionally biased toward basic and acidic residues; that stretch reads DMSKKPEKPEKPGKTDKPAADDRPPFDMDAT.

The protein belongs to the TatB family. As to quaternary structure, the Tat system comprises two distinct complexes: a TatABC complex, containing multiple copies of TatA, TatB and TatC subunits, and a separate TatA complex, containing only TatA subunits. Substrates initially bind to the TatABC complex, which probably triggers association of the separate TatA complex to form the active translocon.

It localises to the cell membrane. Its function is as follows. Part of the twin-arginine translocation (Tat) system that transports large folded proteins containing a characteristic twin-arginine motif in their signal peptide across membranes. Together with TatC, TatB is part of a receptor directly interacting with Tat signal peptides. TatB may form an oligomeric binding site that transiently accommodates folded Tat precursor proteins before their translocation. The protein is Sec-independent protein translocase protein TatB of Streptomyces coelicolor (strain ATCC BAA-471 / A3(2) / M145).